Reading from the N-terminus, the 597-residue chain is Scarecrow-like protein 5 (597 aa).

Residues 111–172 form a disordered region; the sequence is ESSSGTKSHP…SPLSGSSATN (62 aa). The segment covering 123-169 has biased composition (low complexity); that stretch reads NNKNNSSSTTSFSSNESPISQANNNNLSRFNNHSPEENNNSPLSGSS. A GRAS domain is found at 218–597; it reads SMEMISRGDL…QPLITSCAWR (380 aa). The tract at residues 225–285 is leucine repeat I (LRI); sequence GDLKGVLYEC…VARLASSGSS (61 aa). The segment at 304 to 369 is VHIID; that stretch reads MHILYEACPY…GGPPNVRITG (66 aa). Residues 335-339 carry the VHIID motif; it reads VHIID. The leucine repeat II (LRII) stretch occupies residues 385 to 417; it reads LVGQRLGKLAEMCGVPFEFHGAALCCTEVEIEK. The segment at 426 to 520 is PFYRE; it reads LAVNFPLVLH…QHCLAREVVN (95 aa). Residues 523-597 are SAW; the sequence is ACEGVEREER…QPLITSCAWR (75 aa).

It belongs to the GRAS family. In terms of tissue distribution, expressed in seedlings, roots, shoots, leaves, flowers and siliques.

The protein localises to the nucleus. In terms of biological role, probable transcription factor involved in plant development. The sequence is that of Scarecrow-like protein 5 (SCL5) from Arabidopsis thaliana (Mouse-ear cress).